A 331-amino-acid polypeptide reads, in one-letter code: High-affinity nickel-transport protein NixA (331 aa).

7 helical membrane passes run 3 to 23 (LWFP…ALLF), 77 to 97 (MGHS…IAWA), 110 to 130 (VVGT…NAII), 184 to 204 (PVGF…LLAL), 213 to 233 (VVGM…FDTL), 259 to 279 (ITAL…FQVI), and 302 to 322 (DLGY…FFLW).

It belongs to the NiCoT transporter (TC 2.A.52) family.

It is found in the cell inner membrane. Functionally, high-affinity nickel intake protein. Imports nickel ions in an energy-dependent fashion. Necessary for the expression of catalytically active urease. This is High-affinity nickel-transport protein NixA (nixA) from Helicobacter pylori (strain J99 / ATCC 700824) (Campylobacter pylori J99).